The primary structure comprises 207 residues: NAD(P)H-quinone oxidoreductase subunit K, chloroplastic (207 aa).

[4Fe-4S] cluster contacts are provided by C47, C48, C112, and C143.

It belongs to the complex I 20 kDa subunit family. NDH is composed of at least 16 different subunits, 5 of which are encoded in the nucleus. [4Fe-4S] cluster is required as a cofactor.

The protein resides in the plastid. The protein localises to the chloroplast thylakoid membrane. The catalysed reaction is a plastoquinone + NADH + (n+1) H(+)(in) = a plastoquinol + NAD(+) + n H(+)(out). It carries out the reaction a plastoquinone + NADPH + (n+1) H(+)(in) = a plastoquinol + NADP(+) + n H(+)(out). Functionally, NDH shuttles electrons from NAD(P)H:plastoquinone, via FMN and iron-sulfur (Fe-S) centers, to quinones in the photosynthetic chain and possibly in a chloroplast respiratory chain. The immediate electron acceptor for the enzyme in this species is believed to be plastoquinone. Couples the redox reaction to proton translocation, and thus conserves the redox energy in a proton gradient. This Psilotum nudum (Whisk fern) protein is NAD(P)H-quinone oxidoreductase subunit K, chloroplastic.